The following is a 545-amino-acid chain: Chaperonin GroEL (545 aa).

ATP-binding positions include 29–32 (TLGP), 86–90 (DGTTT), glycine 413, 476–478 (NAA), and aspartate 492.

This sequence belongs to the chaperonin (HSP60) family. Forms a cylinder of 14 subunits composed of two heptameric rings stacked back-to-back. Interacts with the co-chaperonin GroES.

The protein localises to the cytoplasm. It catalyses the reaction ATP + H2O + a folded polypeptide = ADP + phosphate + an unfolded polypeptide.. Functionally, together with its co-chaperonin GroES, plays an essential role in assisting protein folding. The GroEL-GroES system forms a nano-cage that allows encapsulation of the non-native substrate proteins and provides a physical environment optimized to promote and accelerate protein folding. The sequence is that of Chaperonin GroEL from Oceanobacillus iheyensis (strain DSM 14371 / CIP 107618 / JCM 11309 / KCTC 3954 / HTE831).